A 377-amino-acid polypeptide reads, in one-letter code: Alanine racemase (377 aa).

Lys33 serves as the catalytic Proton acceptor; specific for D-alanine. N6-(pyridoxal phosphate)lysine is present on Lys33. Arg134 contacts substrate. Residue Tyr267 is the Proton acceptor; specific for L-alanine of the active site. Substrate is bound at residue Met315.

This sequence belongs to the alanine racemase family. Pyridoxal 5'-phosphate serves as cofactor.

It carries out the reaction L-alanine = D-alanine. The protein operates within amino-acid biosynthesis; D-alanine biosynthesis; D-alanine from L-alanine: step 1/1. In terms of biological role, catalyzes the interconversion of L-alanine and D-alanine. May also act on other amino acids. This Treponema pallidum subsp. pallidum (strain SS14) protein is Alanine racemase (alr).